A 50-amino-acid polypeptide reads, in one-letter code: Major pollen allergen Ole e 6 (50 aa).

3 cysteine pairs are disulfide-bonded: C8/C34, C12/C30, and C16/C26.

In terms of tissue distribution, expressed in pollen.

This is Major pollen allergen Ole e 6 (OLE6) from Olea europaea (Common olive).